A 359-amino-acid polypeptide reads, in one-letter code: Alanine racemase (359 aa).

Lysine 35 functions as the Proton acceptor; specific for D-alanine in the catalytic mechanism. Lysine 35 is modified (N6-(pyridoxal phosphate)lysine). Arginine 131 provides a ligand contact to substrate. Tyrosine 253 (proton acceptor; specific for L-alanine) is an active-site residue. Methionine 301 contributes to the substrate binding site.

Belongs to the alanine racemase family. Requires pyridoxal 5'-phosphate as cofactor.

The catalysed reaction is L-alanine = D-alanine. The protein operates within amino-acid biosynthesis; D-alanine biosynthesis; D-alanine from L-alanine: step 1/1. In terms of biological role, catalyzes the interconversion of L-alanine and D-alanine. May also act on other amino acids. In Laribacter hongkongensis (strain HLHK9), this protein is Alanine racemase (alr).